Here is a 420-residue protein sequence, read N- to C-terminus: ATP phosphoribosyltransferase regulatory subunit (420 aa).

It belongs to the class-II aminoacyl-tRNA synthetase family. HisZ subfamily. Heteromultimer composed of HisG and HisZ subunits.

It is found in the cytoplasm. It functions in the pathway amino-acid biosynthesis; L-histidine biosynthesis; L-histidine from 5-phospho-alpha-D-ribose 1-diphosphate: step 1/9. Required for the first step of histidine biosynthesis. May allow the feedback regulation of ATP phosphoribosyltransferase activity by histidine. The chain is ATP phosphoribosyltransferase regulatory subunit from Bacillus cereus (strain ATCC 14579 / DSM 31 / CCUG 7414 / JCM 2152 / NBRC 15305 / NCIMB 9373 / NCTC 2599 / NRRL B-3711).